The primary structure comprises 191 residues: Small ribosomal subunit protein uS5 (191 aa).

The S5 DRBM domain maps to 20–83; sequence FADRLVAINR…EQAKRQMIRV (64 aa). A disordered region spans residues 158 to 191; sequence TSPRMVAQRRGKKVSDILKKDGEPAEAAAEPAEA. Basic and acidic residues predominate over residues 170-180; it reads KVSDILKKDGE. Low complexity predominate over residues 182–191; the sequence is AEAAAEPAEA.

Belongs to the universal ribosomal protein uS5 family. Part of the 30S ribosomal subunit. Contacts proteins S4 and S8.

Its function is as follows. With S4 and S12 plays an important role in translational accuracy. Functionally, located at the back of the 30S subunit body where it stabilizes the conformation of the head with respect to the body. The sequence is that of Small ribosomal subunit protein uS5 from Dinoroseobacter shibae (strain DSM 16493 / NCIMB 14021 / DFL 12).